Here is a 331-residue protein sequence, read N- to C-terminus: Biotin synthase (331 aa).

The 225-residue stretch at 43 to 267 folds into the Radical SAM core domain; the sequence is NTVQVSTLLS…LMPASYVRLS (225 aa). [4Fe-4S] cluster is bound by residues Cys-58, Cys-62, and Cys-65. Residues Cys-102, Cys-133, Cys-193, and Arg-265 each contribute to the [2Fe-2S] cluster site.

The protein belongs to the radical SAM superfamily. Biotin synthase family. Homodimer. [4Fe-4S] cluster is required as a cofactor. Requires [2Fe-2S] cluster as cofactor.

The enzyme catalyses (4R,5S)-dethiobiotin + (sulfur carrier)-SH + 2 reduced [2Fe-2S]-[ferredoxin] + 2 S-adenosyl-L-methionine = (sulfur carrier)-H + biotin + 2 5'-deoxyadenosine + 2 L-methionine + 2 oxidized [2Fe-2S]-[ferredoxin]. The protein operates within cofactor biosynthesis; biotin biosynthesis; biotin from 7,8-diaminononanoate: step 2/2. In terms of biological role, catalyzes the conversion of dethiobiotin (DTB) to biotin by the insertion of a sulfur atom into dethiobiotin via a radical-based mechanism. This is Biotin synthase from Alkalilimnicola ehrlichii (strain ATCC BAA-1101 / DSM 17681 / MLHE-1).